The sequence spans 264 residues: Putative hydro-lyase Cgl2544/cg2803 (264 aa).

It belongs to the D-glutamate cyclase family.

In Corynebacterium glutamicum (strain ATCC 13032 / DSM 20300 / JCM 1318 / BCRC 11384 / CCUG 27702 / LMG 3730 / NBRC 12168 / NCIMB 10025 / NRRL B-2784 / 534), this protein is Putative hydro-lyase Cgl2544/cg2803.